The sequence spans 147 residues: Cytochrome c-type biogenesis protein CcmE (147 aa).

The Cytoplasmic portion of the chain corresponds to 1–9 (MKSLKKQRR). The helical; Signal-anchor for type II membrane protein transmembrane segment at 10 to 30 (IQIIALATVALVGSTALIGYA) threads the bilayer. The Periplasmic segment spans residues 31–147 (MRDGINYFRS…EQGVYREGDS (117 aa)). Positions 123 and 127 each coordinate heme.

The protein belongs to the CcmE/CycJ family.

Its subcellular location is the cell inner membrane. In terms of biological role, heme chaperone required for the biogenesis of c-type cytochromes. Transiently binds heme delivered by CcmC and transfers the heme to apo-cytochromes in a process facilitated by CcmF and CcmH. This chain is Cytochrome c-type biogenesis protein CcmE, found in Ruegeria sp. (strain TM1040) (Silicibacter sp.).